The following is a 253-amino-acid chain: RNA polymerase sigma-F factor (253 aa).

The Polymerase core binding motif lies at Asp-61–Val-74. A DNA-binding region (H-T-H motif) is located at residues Gln-221 to Lys-240.

It belongs to the sigma-70 factor family.

Sigma factors are initiation factors that promote the attachment of RNA polymerase to specific initiation sites and are then released. This sigma factor is responsible for the expression of sporulation specific genes. It is responsible for directing gene expression in the forespore compartment of developing cells of Bacillus. This Priestia megaterium (Bacillus megaterium) protein is RNA polymerase sigma-F factor (sigF).